Here is a 246-residue protein sequence, read N- to C-terminus: Orotidine 5'-phosphate decarboxylase (246 aa).

Substrate-binding positions include Asp22, Lys44, Asp71 to Thr80, Thr130, Arg191, Gln201, Gly221, and Arg222. The active-site Proton donor is the Lys73.

Belongs to the OMP decarboxylase family. Type 1 subfamily. In terms of assembly, homodimer.

It carries out the reaction orotidine 5'-phosphate + H(+) = UMP + CO2. It functions in the pathway pyrimidine metabolism; UMP biosynthesis via de novo pathway; UMP from orotate: step 2/2. Its function is as follows. Catalyzes the decarboxylation of orotidine 5'-monophosphate (OMP) to uridine 5'-monophosphate (UMP). The polypeptide is Orotidine 5'-phosphate decarboxylase (Neisseria gonorrhoeae (strain ATCC 700825 / FA 1090)).